We begin with the raw amino-acid sequence, 506 residues long: Maturase K (506 aa).

It belongs to the intron maturase 2 family. MatK subfamily.

It is found in the plastid. The protein localises to the chloroplast. Functionally, usually encoded in the trnK tRNA gene intron. Probably assists in splicing its own and other chloroplast group II introns. This is Maturase K from Sullivantia sullivantii (Sullivant's coolwort).